A 702-amino-acid polypeptide reads, in one-letter code: Pseudouridylate synthase PUS7L (702 aa).

Serine 79 carries the phosphoserine modification. The tract at residues 84-116 is disordered; sequence NSEGAADLPGCSDGDRSHQSDSEKENSVNSVTS. Basic and acidic residues predominate over residues 96-109; the sequence is DGDRSHQSDSEKEN. Catalysis depends on aspartate 339, which acts as the Nucleophile. The 223-residue stretch at 424–646 folds into the TRUD domain; sequence GFVNYYGPQR…PGCYRHIVKH (223 aa).

The protein belongs to the pseudouridine synthase TruD family.

The enzyme catalyses a uridine in mRNA = a pseudouridine in mRNA. Pseudouridine synthase that catalyzes pseudouridylation of mRNAs. The chain is Pseudouridylate synthase PUS7L from Mus musculus (Mouse).